A 140-amino-acid polypeptide reads, in one-letter code: Large ribosomal subunit protein uL22 (140 aa).

It belongs to the universal ribosomal protein uL22 family. Part of the 50S ribosomal subunit.

This protein binds specifically to 23S rRNA; its binding is stimulated by other ribosomal proteins, e.g. L4, L17, and L20. It is important during the early stages of 50S assembly. It makes multiple contacts with different domains of the 23S rRNA in the assembled 50S subunit and ribosome. Its function is as follows. The globular domain of the protein is located near the polypeptide exit tunnel on the outside of the subunit, while an extended beta-hairpin is found that lines the wall of the exit tunnel in the center of the 70S ribosome. This is Large ribosomal subunit protein uL22 from Parafrankia sp. (strain EAN1pec).